The primary structure comprises 319 residues: Acetyl-coenzyme A carboxylase carboxyl transferase subunit alpha (319 aa).

One can recognise a CoA carboxyltransferase C-terminal domain in the interval 38–292 (ALDKKAETLL…GKAIEMMLKE (255 aa)).

The protein belongs to the AccA family. In terms of assembly, acetyl-CoA carboxylase is a heterohexamer composed of biotin carboxyl carrier protein (AccB), biotin carboxylase (AccC) and two subunits each of ACCase subunit alpha (AccA) and ACCase subunit beta (AccD).

It is found in the cytoplasm. It carries out the reaction N(6)-carboxybiotinyl-L-lysyl-[protein] + acetyl-CoA = N(6)-biotinyl-L-lysyl-[protein] + malonyl-CoA. It functions in the pathway lipid metabolism; malonyl-CoA biosynthesis; malonyl-CoA from acetyl-CoA: step 1/1. In terms of biological role, component of the acetyl coenzyme A carboxylase (ACC) complex. First, biotin carboxylase catalyzes the carboxylation of biotin on its carrier protein (BCCP) and then the CO(2) group is transferred by the carboxyltransferase to acetyl-CoA to form malonyl-CoA. The protein is Acetyl-coenzyme A carboxylase carboxyl transferase subunit alpha of Cereibacter sphaeroides (strain ATCC 17029 / ATH 2.4.9) (Rhodobacter sphaeroides).